The following is a 682-amino-acid chain: Potassium-transporting ATPase ATP-binding subunit (682 aa).

4 consecutive transmembrane segments (helical) span residues 34–54 (PVMF…LAMV), 58–78 (IAGS…TVLF), 219–239 (IALT…TATL), and 254–274 (VLVA…LSAI). Catalysis depends on aspartate 307, which acts as the 4-aspartylphosphate intermediate. ATP is bound by residues aspartate 344, glutamate 348, 377-384 (FTAQSRMS), and lysine 395. Mg(2+)-binding residues include aspartate 518 and aspartate 522. A run of 3 helical transmembrane segments spans residues 588–608 (FAII…LNVM), 616–636 (AILS…PLAL), and 662–682 (LVVP…LGLA).

The protein belongs to the cation transport ATPase (P-type) (TC 3.A.3) family. Type IA subfamily. In terms of assembly, the system is composed of three essential subunits: KdpA, KdpB and KdpC.

The protein resides in the cell inner membrane. The catalysed reaction is K(+)(out) + ATP + H2O = K(+)(in) + ADP + phosphate + H(+). Part of the high-affinity ATP-driven potassium transport (or Kdp) system, which catalyzes the hydrolysis of ATP coupled with the electrogenic transport of potassium into the cytoplasm. This subunit is responsible for energy coupling to the transport system and for the release of the potassium ions to the cytoplasm. The polypeptide is Potassium-transporting ATPase ATP-binding subunit (Salmonella agona (strain SL483)).